The chain runs to 542 residues: Cytochrome P450 monooxygenase 91 (542 aa).

The signal sequence occupies residues 1–22 (MLDILRFVLICGILWILRRVLL). N-linked (GlcNAc...) asparagine glycosylation is found at asparagine 299 and asparagine 392. Residue cysteine 482 coordinates heme.

Belongs to the cytochrome P450 family. Requires heme as cofactor.

It participates in secondary metabolite biosynthesis. Its function is as follows. Cytochrome P450 monooxygenase that is able to use dehydroabietic acid as a substrate for oxidation. The chain is Cytochrome P450 monooxygenase 91 from Postia placenta (strain ATCC 44394 / Madison 698-R) (Brown rot fungus).